The primary structure comprises 131 residues: Tegument protein ORF52 (131 aa).

Residues 103 to 131 are disordered; that stretch reads SDGGTAKPPPGANNRRRRGASTTRAGVDD. Positions 122–131 are enriched in low complexity; the sequence is ASTTRAGVDD. A Phosphoserine; by host modification is found at Ser-123.

This sequence belongs to the herpesviridae BLRF2 family. Homooligomer; homooligomerizes and binds double-stranded DNA (dsDNA) cooperatively. Interacts with host CGAS. Interacts with PQBP1.

It localises to the host cytoplasm. It is found in the virion tegument. In terms of biological role, plays a role in the inhibition of host innate immune system by targeting the CGAS enzymatic activity which is the principal cytosolic DNA sensor that detects invading viral DNA. Acts by inhibiting CGAS-DNA phase separation: directly binds double-stranded DNA (dsDNA) in a length dependent but sequence independent manner and is able to form DNA-induced phase separation in infected cells. DNA phase separation of ORF52 mediates disruption of liquid-like droplets in which CGAS is activated, thereby preventing CGAS activity. Targets also the HDP-RNP complex composed of DNA-PK subunits and paraspeckle proteins. This complex is a key nuclear regulator of DNA-mediated activation of innate immune response through the cGAS-STING pathway. This chain is Tegument protein ORF52, found in Homo sapiens (Human).